The chain runs to 276 residues: Krueppel homolog 2 (276 aa).

Positions 1 to 37 (MSAPTDQPPRSEGAQTNSSERSSQQQEQPQQSQSQNV) are disordered. Low complexity predominate over residues 18 to 35 (SSERSSQQQEQPQQSQSQ). S22 carries the post-translational modification Phosphoserine. 3 consecutive transmembrane segments (helical) span residues 53–73 (ALWA…LPIF), 125–145 (LIFF…LYSV), and 181–201 (ILKA…VLAF).

This sequence belongs to the PER33/POM33 family.

It is found in the membrane. Functionally, member of the dosage-dependent hierarchy effective upon white gene expression. The sequence is that of Krueppel homolog 2 (Kr-h2) from Drosophila melanogaster (Fruit fly).